Consider the following 317-residue polypeptide: Epidermal growth factor-like protein (317 aa).

A signal peptide spans 1–23 (MDFKIFLFLTAIFMIVGVTVSTA). The tract at residues 24–33 (TTNPTAPRAY) is may be required for E.coli agglutination activity. 6 consecutive EGF-like domains span residues 93-128 (HCTPDCPSGCGLGNCTAPNVCTCNKGAGFGPDGKCI), 130-161 (VCPGRCLNGQCYGNFCNCNSGFVLEPNGRYCT), 163-195 (GCTRNCGPGGQCVGNNQCSCLSGFALNSQGTCQ), 208-243 (ACEPLCPKGCVNGECVAPGQCRCKSGYALNSSKVCA), 245-280 (KCSQPCYNGFCSAPNVCTCKEGYIKDATSRNGNRCI), and 282-315 (YCAAGCPNGTCSAPNFCICKQGYIKQSKGSNVCV). 18 disulfides stabilise this stretch: Cys-98/Cys-107, Cys-102/Cys-113, Cys-115/Cys-127, Cys-131/Cys-140, Cys-135/Cys-145, Cys-147/Cys-160, Cys-164/Cys-174, Cys-168/Cys-180, Cys-182/Cys-194, Cys-213/Cys-222, Cys-217/Cys-228, Cys-230/Cys-242, Cys-246/Cys-255, Cys-250/Cys-261, Cys-263/Cys-279, Cys-283/Cys-292, Cys-287/Cys-298, and Cys-300/Cys-314.

The protein resides in the secreted. Its function is as follows. Binds to lipopolysaccharides (LPS) present on the cell walls of Gram-negative bacteria, behaving as a pattern recognition receptor (PRR). Induces bacterial aggregation and enhances their subsequent clearance by the innate immune response. Binds to the inner core oligosaccharides region of rough-type bacterial LPS. Displays activity against the Gram-negative bacterium E.coli. Does not display any activity against the Gram-positive bacterium S.aureus or the fungi C.albicans. This Holotrichia diomphalia (Korean black chafer) protein is Epidermal growth factor-like protein.